We begin with the raw amino-acid sequence, 252 residues long: MRNLEKINELLEIFGHFDVNFAKTMEEKIDTQYFVLENLKNSMNNDEMFIKLVILNSIVSYQLCTTGELWWEEFSKYWSKHDANNENLGESYVNFLENSKGNKRLLNVKIKRIERITPFLENLNLLDFKTYYSDMEKLLENLSKYLNSKKNSKTVVFAVKMFGYASRIVFNEFFPYPMNIEIPKDSRIEKYTLKFTDENPIKFWNEVSKTAKIPPLHIDSIIWPVLGRNFDFKSCENKLDENFRYLLKLTEL.

Glutamine 32, serine 60, and tryptophan 71 together coordinate 8-oxoguanine. The helix-hairpin-helix stretch occupies residues 129-193 (KTYYSDMEKL…KDSRIEKYTL (65 aa)). Catalysis depends on lysine 153, which acts as the Schiff-base intermediate with DNA. 8-oxoguanine-binding residues include phenylalanine 157 and proline 183. Aspartate 185 is an active-site residue. Positions 219 and 223 each coordinate 8-oxoguanine.

Belongs to the archaeal N-glycosylase/DNA lyase (AGOG) family.

The catalysed reaction is 2'-deoxyribonucleotide-(2'-deoxyribose 5'-phosphate)-2'-deoxyribonucleotide-DNA = a 3'-end 2'-deoxyribonucleotide-(2,3-dehydro-2,3-deoxyribose 5'-phosphate)-DNA + a 5'-end 5'-phospho-2'-deoxyribonucleoside-DNA + H(+). In terms of biological role, DNA repair enzyme that is part of the base excision repair (BER) pathway; protects from oxidative damage by removing the major product of DNA oxidation, 8-oxoguanine (GO), from single- and double-stranded DNA substrates. This is N-glycosylase/DNA lyase from Methanococcus maripaludis (strain DSM 14266 / JCM 13030 / NBRC 101832 / S2 / LL).